Consider the following 54-residue polypeptide: Ovomucoid (54 aa).

One can recognise a Kazal-like domain in the interval 4-54 (VDCSDYPRPVCTLDYMPLCGSDNKTYSNKCNFCNAVVDSNGTITLSHFGRC). Disulfide bonds link cysteine 6-cysteine 36, cysteine 14-cysteine 33, and cysteine 22-cysteine 54. Residue asparagine 43 is glycosylated (N-linked (GlcNAc...) asparagine).

The protein localises to the secreted. The polypeptide is Ovomucoid (Corvus albus (Pied crow)).